A 395-amino-acid polypeptide reads, in one-letter code: Protein pelota (395 aa).

Positions 210-212 match the PGF motif motif; the sequence is PGF. The segment at 371–395 is disordered; that stretch reads PELEDSDDDDDEDGAAGGVADSDSD. Residues 372 to 384 are compositionally biased toward acidic residues; that stretch reads ELEDSDDDDDEDG.

Belongs to the eukaryotic release factor 1 family. Pelota subfamily. In terms of assembly, component of the Pelota-HBS1L complex, also named Dom34-Hbs1 complex, composed of pelo and HBS1. Interacts with Pink1 and Cnot4; the interaction with Cnot4 appears to be Pink1-dependent. A divalent metal cation serves as cofactor. As to expression, expressed in ovaries and muscles (at protein level). Expressed throughout all development stages.

Its subcellular location is the nucleus. The protein resides in the cytoplasm. Component of the Pelota-HBS1L complex, a complex that recognizes stalled ribosomes and triggers the No-Go Decay (NGD) pathway. In the Pelota-HBS1L complex, pelo recognizes ribosomes stalled at the 3' end of an mRNA and engages stalled ribosomes by destabilizing mRNA in the mRNA channel. Following ribosome-binding, the Pelota-HBS1L complex promotes recruitment of pix, which drives the disassembly of stalled ribosomes, followed by degradation of damaged mRNAs as part of the NGD pathway. Required prior to the first meiotic division for spindle formation and nuclear envelope breakdown during spermatogenesis. Together with HBS1, promotes spermatid individualization during spermatogenesis. Required for ovarian germ line stem cell self-renewal and oocyte development during oogenesis. Together with HSB1, required for transposon silencing in the ovary and testis. As part of the Pink1-regulated signaling, is recruited to damaged mitochondrial and is required for recruitment of autophagy receptors and induction of mitophagy. Required for normal eye patterning and for mitotic divisions in the ovary. This is Protein pelota (pelo) from Drosophila melanogaster (Fruit fly).